We begin with the raw amino-acid sequence, 650 residues long: Chaperone protein DnaK (650 aa).

Position 200 is a phosphothreonine; by autocatalysis (T200). Positions A611–Q634 are enriched in low complexity. The segment at A611 to D650 is disordered.

This sequence belongs to the heat shock protein 70 family.

In terms of biological role, acts as a chaperone. In Burkholderia pseudomallei (strain 1710b), this protein is Chaperone protein DnaK.